The following is a 354-amino-acid chain: Uroporphyrinogen decarboxylase (354 aa).

Substrate is bound by residues 27 to 31, Phe46, Asp77, Tyr154, Thr209, and His327; that span reads RRAGR.

The protein belongs to the uroporphyrinogen decarboxylase family. As to quaternary structure, homodimer.

It is found in the cytoplasm. The enzyme catalyses uroporphyrinogen III + 4 H(+) = coproporphyrinogen III + 4 CO2. It participates in porphyrin-containing compound metabolism; protoporphyrin-IX biosynthesis; coproporphyrinogen-III from 5-aminolevulinate: step 4/4. Catalyzes the decarboxylation of four acetate groups of uroporphyrinogen-III to yield coproporphyrinogen-III. The chain is Uroporphyrinogen decarboxylase from Salmonella typhimurium (strain LT2 / SGSC1412 / ATCC 700720).